The following is a 435-amino-acid chain: Methylenetetrahydrofolate--tRNA-(uracil-5-)-methyltransferase TrmFO (435 aa).

Residue 9–14 coordinates FAD; the sequence is GAGLAG.

The protein belongs to the MnmG family. TrmFO subfamily. FAD serves as cofactor.

The protein resides in the cytoplasm. The enzyme catalyses uridine(54) in tRNA + (6R)-5,10-methylene-5,6,7,8-tetrahydrofolate + NADH + H(+) = 5-methyluridine(54) in tRNA + (6S)-5,6,7,8-tetrahydrofolate + NAD(+). It carries out the reaction uridine(54) in tRNA + (6R)-5,10-methylene-5,6,7,8-tetrahydrofolate + NADPH + H(+) = 5-methyluridine(54) in tRNA + (6S)-5,6,7,8-tetrahydrofolate + NADP(+). Functionally, catalyzes the folate-dependent formation of 5-methyl-uridine at position 54 (M-5-U54) in all tRNAs. The chain is Methylenetetrahydrofolate--tRNA-(uracil-5-)-methyltransferase TrmFO from Enterococcus faecalis (strain ATCC 700802 / V583).